We begin with the raw amino-acid sequence, 359 residues long: Guanine nucleotide-binding protein subunit alpha-11 (359 aa).

S-palmitoyl cysteine attachment occurs at residues Cys9 and Cys10. Positions Arg38 to Val359 constitute a G-alpha domain. Positions Lys41 to Thr54 are G1 motif. GTP-binding positions include Gly46–Ser53 and Leu180–Arg183. Residue Ser53 participates in Mg(2+) binding. Residues Asp178–Thr186 form a G2 motif region. Thr186 is a Mg(2+) binding site. Positions Phe201–Arg210 are G3 motif. The tract at residues Ile270–Asp277 is G4 motif. GTP-binding positions include Asn274–Asp277 and Ala331. Positions Thr329–Thr334 are G5 motif.

This sequence belongs to the G-alpha family. G(q) subfamily. As to quaternary structure, g proteins are composed of 3 units; alpha, beta and gamma. The alpha chain contains the guanine nucleotide binding site. Interacts with RGS22. Interacts with NTSR1.

It localises to the cell membrane. It is found in the cytoplasm. The enzyme catalyses GTP + H2O = GDP + phosphate + H(+). In terms of biological role, guanine nucleotide-binding proteins (G proteins) function as transducers downstream of G protein-coupled receptors (GPCRs) in numerous signaling cascades. The alpha chain contains the guanine nucleotide binding site and alternates between an active, GTP-bound state and an inactive, GDP-bound state. Signaling by an activated GPCR promotes GDP release and GTP binding. The alpha subunit has a low GTPase activity that converts bound GTP to GDP, thereby terminating the signal. Both GDP release and GTP hydrolysis are modulated by numerous regulatory proteins. Signaling is mediated via phospholipase C-beta-dependent inositol lipid hydrolysis for signal propagation: activates phospholipase C-beta: following GPCR activation, GNA11 activates PLC-beta (PLCB1, PLCB2, PLCB3 or PLCB4), leading to production of diacylglycerol (DAG) and inositol 1,4,5-trisphosphate (IP3). Transduces FFAR4 signaling in response to long-chain fatty acids (LCFAs). Together with GNAQ, required for heart development. In the respiratory epithelium, transmits OXGR1-dependent signals that lead to downstream intracellular Ca(2+) release and mucocilliary clearance of airborne pathogens. In Bos taurus (Bovine), this protein is Guanine nucleotide-binding protein subunit alpha-11 (GNA11).